Consider the following 205-residue polypeptide: Small ribosomal subunit protein uS4 (205 aa).

Residues 18 to 46 are disordered; it reads NIWGRPKSPVNRREYGPGQHGQRRKGKLS. The S4 RNA-binding domain occupies 94–157; that stretch reads RRLDTVVYRA…KQLAFVLEAS (64 aa).

It belongs to the universal ribosomal protein uS4 family. As to quaternary structure, part of the 30S ribosomal subunit. Contacts protein S5. The interaction surface between S4 and S5 is involved in control of translational fidelity.

Functionally, one of the primary rRNA binding proteins, it binds directly to 16S rRNA where it nucleates assembly of the body of the 30S subunit. In terms of biological role, with S5 and S12 plays an important role in translational accuracy. The sequence is that of Small ribosomal subunit protein uS4 from Rhodopseudomonas palustris (strain HaA2).